Here is a 517-residue protein sequence, read N- to C-terminus: MLVHGRRLGLLLGRSHVAAPKHTSHLPRRTVHLNHFVSKGEAASEAEPPQSTFTVAVKDNIATQAHPTTCASNILRDYTSPYEATVVRQLRRRGARVVGTTNLDEFGMGTHSTHSAHGPVASPAGRSAGGSSGGSAVAVAAGEVEVALGTDTGGSVRLPAAYNGVVGFKPSYGMLSRYGVVPYANSLDTVGLLARSVERIRDLVVGEGLWAQHDDKDPTSLSAAARLRCASGRTGYKGEAAKVGWEGLTFGIPLEYNIFELDPLIREAWEEVAALLQSLGANVVPVSLPTTRQALSAYYVLAPAEASSNLAKYDGVRYGNPGPESENEGGVLYSAARGAGFGDEVKRRILLGAYSLSSEAMDNYFVQAQKVRRLVRGDFDRVFLLDNPLVDKEPTEEGFGEEAEQADLADLHEDVPLLNKRGPARVDFILSPTAPTPAPTLDEALSQTSLDSATNDVFTVPASLAGLPAISLPVDMKEDVHGVGRFAGIQIIGQYWDDARLLDVAVALRGVLGRGLV.

Residues K58 and S131 each act as charge relay system in the active site. A disordered region spans residues 106–132 (FGMGTHSTHSAHGPVASPAGRSAGGSS). Residue S155 is the Acyl-ester intermediate of the active site.

This sequence belongs to the amidase family. GatA subfamily. As to quaternary structure, subunit of the heterotrimeric GatCAB amidotransferase (AdT) complex, composed of A, B and C subunits.

Its subcellular location is the mitochondrion. The enzyme catalyses L-glutamyl-tRNA(Gln) + L-glutamine + ATP + H2O = L-glutaminyl-tRNA(Gln) + L-glutamate + ADP + phosphate + H(+). Allows the formation of correctly charged Gln-tRNA(Gln) through the transamidation of misacylated Glu-tRNA(Gln) in the mitochondria. The reaction takes place in the presence of glutamine and ATP through an activated gamma-phospho-Glu-tRNA(Gln). The sequence is that of Glutamyl-tRNA(Gln) amidotransferase subunit A, mitochondrial from Pyricularia oryzae (strain 70-15 / ATCC MYA-4617 / FGSC 8958) (Rice blast fungus).